A 292-amino-acid chain; its full sequence is Protoheme IX farnesyltransferase (292 aa).

Transmembrane regions (helical) follow at residues 15 to 35 (YLVL…LGGM), 49 to 69 (FWTL…NMVI), 104 to 124 (VFSL…LVAL), 147 to 167 (IGGI…SGSV), 171 to 191 (AIAL…VLAL), 218 to 238 (TLLY…TGLV), 242 to 262 (YFVV…KFFF), and 271 to 291 (LFFF…VDMV).

The protein belongs to the UbiA prenyltransferase family. Protoheme IX farnesyltransferase subfamily.

The protein localises to the cell inner membrane. The catalysed reaction is heme b + (2E,6E)-farnesyl diphosphate + H2O = Fe(II)-heme o + diphosphate. It functions in the pathway porphyrin-containing compound metabolism; heme O biosynthesis; heme O from protoheme: step 1/1. Functionally, converts heme B (protoheme IX) to heme O by substitution of the vinyl group on carbon 2 of heme B porphyrin ring with a hydroxyethyl farnesyl side group. This chain is Protoheme IX farnesyltransferase, found in Aquifex aeolicus (strain VF5).